A 766-amino-acid polypeptide reads, in one-letter code: Subtilisin-like protease SBT4.15 (766 aa).

The N-terminal stretch at 1–23 (MVSNQRVRLFMLCFCLVNNAVIA) is a signal peptide. The propeptide at 24–113 (ATEDENVERK…VFKNTQRQLH (90 aa)) is activation peptide. The 79-residue stretch at 35–113 (YIVYMGEATE…VFKNTQRQLH (79 aa)) folds into the Inhibitor I9 domain. The 485-residue stretch at 117 to 601 (SWDFLGLVES…SGQINPRRAI (485 aa)) folds into the Peptidase S8 domain. D144 functions as the Charge relay system in the catalytic mechanism. N-linked (GlcNAc...) asparagine glycosylation is present at N175. H210 acts as the Charge relay system in catalysis. N-linked (GlcNAc...) asparagine glycosylation is found at N233, N376, and N465. The PA domain occupies 365 to 460 (MYPLTSGSLA…YVFFEDGTKI (96 aa)). The active-site Charge relay system is the S543. Residues N624, N638, and N668 are each glycosylated (N-linked (GlcNAc...) asparagine).

This sequence belongs to the peptidase S8 family. In terms of processing, the C-terminal propeptide is autocleaved.

It is found in the secreted. This is Subtilisin-like protease SBT4.15 from Arabidopsis thaliana (Mouse-ear cress).